Here is a 218-residue protein sequence, read N- to C-terminus: Small ribosomal subunit protein uS3c (218 aa).

The KH type-2 domain maps to 47-118 (VQKNIRISSG…KLNIAITRIS (72 aa)).

The protein belongs to the universal ribosomal protein uS3 family. As to quaternary structure, part of the 30S ribosomal subunit.

The protein localises to the plastid. It localises to the chloroplast. This Nasturtium officinale (Watercress) protein is Small ribosomal subunit protein uS3c (rps3).